A 361-amino-acid chain; its full sequence is dTDP-glucose 4,6-dehydratase 1 (361 aa).

Residues 11–12 (FI), 32–35 (DKLT), 58–59 (DI), 80–84 (LAAES), and threonine 99 contribute to the NAD(+) site. Residue serine 84 coordinates substrate. Substrate is bound at residue threonine 133. Aspartate 134 acts as the Proton donor in catalysis. Active-site proton acceptor residues include glutamate 135 and tyrosine 167. An NAD(+)-binding site is contributed by 167 to 171 (YSASK). Residue asparagine 196 participates in substrate binding. Asparagine 197 contributes to the NAD(+) binding site. Substrate-binding positions include 206–207 (KL), 222–224 (PIY), arginine 231, asparagine 266, and 296–300 (DRPGH).

It belongs to the NAD(P)-dependent epimerase/dehydratase family. dTDP-glucose dehydratase subfamily. Homodimer. The cofactor is NAD(+).

It catalyses the reaction dTDP-alpha-D-glucose = dTDP-4-dehydro-6-deoxy-alpha-D-glucose + H2O. It functions in the pathway carbohydrate biosynthesis; dTDP-L-rhamnose biosynthesis. It participates in bacterial outer membrane biogenesis; LPS O-antigen biosynthesis. Catalyzes the dehydration of dTDP-D-glucose to form dTDP-6-deoxy-D-xylo-4-hexulose via a three-step process involving oxidation, dehydration and reduction. This Escherichia coli (strain K12) protein is dTDP-glucose 4,6-dehydratase 1 (rfbB).